Consider the following 390-residue polypeptide: Heme chaperone HemW (390 aa).

The region spanning 15-254 (PMPGQPFGVY…DARLSAAGFA (240 aa)) is the Radical SAM core domain. Position 24 (Y24) interacts with S-adenosyl-L-methionine. [4Fe-4S] cluster-binding residues include C30, C34, and C37. S-adenosyl-L-methionine contacts are provided by residues G82, 83-84 (GT), E115, Q142, R154, and D179.

It belongs to the anaerobic coproporphyrinogen-III oxidase family. HemW subfamily. The cofactor is [4Fe-4S] cluster.

The protein localises to the cytoplasm. Functionally, probably acts as a heme chaperone, transferring heme to an unknown acceptor. Binds one molecule of heme per monomer, possibly covalently. Binds 1 [4Fe-4S] cluster. The cluster is coordinated with 3 cysteines and an exchangeable S-adenosyl-L-methionine. The chain is Heme chaperone HemW from Mycobacterium tuberculosis (strain CDC 1551 / Oshkosh).